A 326-amino-acid polypeptide reads, in one-letter code: Glyoxalase I (326 aa).

VOC domains follow at residues 22–167 (LLNH…LITY) and 182–322 (KFNH…VVPH). His-25 is a binding site for Zn(2+). A substrate-binding site is contributed by Arg-29. A Zn(2+)-binding site is contributed by Glu-89. Residues Asn-93, Arg-113, His-117, and 147 to 148 (RQ) contribute to the substrate site. His-117 is a Zn(2+) binding site. Glu-163 is a Zn(2+) binding site. Active-site proton donor/acceptor residues include Glu-163 and Glu-318.

The protein belongs to the glyoxalase I family. Monomer. Requires Zn(2+) as cofactor.

The catalysed reaction is (R)-S-lactoylglutathione = methylglyoxal + glutathione. The protein operates within secondary metabolite metabolism; methylglyoxal degradation; (R)-lactate from methylglyoxal: step 1/2. Catalyzes the conversion of hemimercaptal, formed from methylglyoxal and glutathione, to S-lactoylglutathione. Can use gamma-glutamylcysteine as a substrate. This Saccharomyces cerevisiae (strain ATCC 204508 / S288c) (Baker's yeast) protein is Glyoxalase I.